The sequence spans 636 residues: Threonine--tRNA ligase (636 aa).

A TGS domain is found at 1 to 59; sequence MPIITLPDGTKKIFEQVVSVEQVAKSMGLVKAALAGEVDGELVSTSFLIKTDANLTIIT. The catalytic stretch occupies residues 240–531; the sequence is DHRKIGKTQD…LIEHYEGAYP (292 aa). Zn(2+) is bound by residues Cys-331, His-382, and His-508.

Belongs to the class-II aminoacyl-tRNA synthetase family. As to quaternary structure, homodimer. Zn(2+) serves as cofactor.

It localises to the cytoplasm. The enzyme catalyses tRNA(Thr) + L-threonine + ATP = L-threonyl-tRNA(Thr) + AMP + diphosphate + H(+). Its function is as follows. Catalyzes the attachment of threonine to tRNA(Thr) in a two-step reaction: L-threonine is first activated by ATP to form Thr-AMP and then transferred to the acceptor end of tRNA(Thr). Also edits incorrectly charged L-seryl-tRNA(Thr). The chain is Threonine--tRNA ligase from Vesicomyosocius okutanii subsp. Calyptogena okutanii (strain HA).